The sequence spans 183 residues: Large ribosomal subunit protein uL22 (183 aa).

It belongs to the universal ribosomal protein uL22 family.

The sequence is that of Large ribosomal subunit protein uL22 (RPL17) from Podocoryna carnea (Hydrozoan).